The chain runs to 496 residues: Galactokinase (496 aa).

The residue at position 2 (A2) is an N-acetylalanine. R56, E62, H63, and D65 together coordinate alpha-D-galactose. 4 residues coordinate ATP: G161, G163, S165, and S166. D210 lines the alpha-D-galactose pocket. D210 acts as the Proton acceptor in catalysis. S252, Q253, and K254 together coordinate ATP. Residue Y262 coordinates alpha-D-galactose.

Belongs to the GHMP kinase family. GalK subfamily. Mg(2+) serves as cofactor. The cofactor is Mn(2+). Requires Ca(2+) as cofactor. As to expression, expressed in roots, stems, leaves, flowers and young siliques. Higher expression in the elongating middle stem region than in the lower or upper stem region.

It catalyses the reaction alpha-D-galactose + ATP = alpha-D-galactose 1-phosphate + ADP + H(+). It participates in carbohydrate metabolism; galactose metabolism. Functionally, sugar-1-kinase with a very high substrate specificity for the alpha-anomeric configuration of D-galacose (D-Gal). Also efficiently converts 2-deoxy-D-Gal to 2-deoxy-D-al-1-phosphate. This Arabidopsis thaliana (Mouse-ear cress) protein is Galactokinase (GAL1).